The chain runs to 165 residues: MSGKLTHIDQTGAANMVDVGSKDETERQAVAEGAVRMKPETLALILEGNAAKGDVIGTARLAGIMAAKRTSDLIPLCHPLMLTKVAVEIEPDENLPGLRVRALARLKGRTGVEMEALTAASVTCLTIYDMAKAVDRHMEIGSIRVIEKSGRKSGDWAVSDPASMR.

Substrate-binding positions include 76-78 (LCH) and 114-115 (ME). The active site involves Asp-129.

The protein belongs to the MoaC family. As to quaternary structure, homohexamer; trimer of dimers.

The enzyme catalyses (8S)-3',8-cyclo-7,8-dihydroguanosine 5'-triphosphate = cyclic pyranopterin phosphate + diphosphate. The protein operates within cofactor biosynthesis; molybdopterin biosynthesis. In terms of biological role, catalyzes the conversion of (8S)-3',8-cyclo-7,8-dihydroguanosine 5'-triphosphate to cyclic pyranopterin monophosphate (cPMP). The chain is Cyclic pyranopterin monophosphate synthase from Brucella canis (strain ATCC 23365 / NCTC 10854 / RM-666).